The following is a 135-amino-acid chain: uncharacterized protein (135 aa).

In terms of domain architecture, HotDog ACOT-type spans 8 to 123; it reads PQGTIVLKTL…IFIYVAIDET (116 aa).

It belongs to the acyl coenzyme A hydrolase family.

This is an uncharacterized protein from Buchnera aphidicola subsp. Schizaphis graminum (strain Sg).